We begin with the raw amino-acid sequence, 588 residues long: Lysophospholipase 2 (588 aa).

The segment at 15 to 38 (NRALPNAPDGYTPQGETCPSKRPS) is disordered. One can recognise a PLA2c domain in the interval 31–574 (TCPSKRPSIR…KTYCWNGTIN (544 aa)). Residues asparagine 41, asparagine 58, asparagine 77, asparagine 84, asparagine 88, asparagine 119, asparagine 123, asparagine 157, asparagine 167, asparagine 228, asparagine 272, asparagine 302, asparagine 340, asparagine 431, asparagine 449, asparagine 478, asparagine 481, asparagine 501, asparagine 510, asparagine 529, asparagine 553, asparagine 570, and asparagine 574 are each glycosylated (N-linked (GlcNAc...) asparagine).

The protein belongs to the lysophospholipase family.

The enzyme catalyses a 1-acyl-sn-glycero-3-phosphocholine + H2O = sn-glycerol 3-phosphocholine + a fatty acid + H(+). Its function is as follows. Catalyzes the release of fatty acids from lysophospholipids. The sequence is that of Lysophospholipase 2 (plb2) from Aspergillus fumigatus (strain ATCC MYA-4609 / CBS 101355 / FGSC A1100 / Af293) (Neosartorya fumigata).